We begin with the raw amino-acid sequence, 260 residues long: Transmembrane protein 70, mitochondrial (260 aa).

The N-terminal 81 residues, 1 to 81, are a transit peptide targeting the mitochondrion; that stretch reads MLFLALGSPW…PVYWEGYVRF (81 aa). Residues 82 to 102 lie on the Mitochondrial matrix side of the membrane; sequence LNTPSDKSEDGRLIYTGNMAR. The chain crosses the membrane as a helical span at residues 103-123; that stretch reads AVFGVKCFSYSTSLIGLTFLP. Residues 124 to 141 lie on the Mitochondrial intermembrane side of the membrane; that stretch reads YIFTQNNAISESVPLPIQ. Residues 142 to 162 traverse the membrane as a helical segment; it reads IIFYGIMGSFTVITPVLLHFI. Residues 163-260 are Mitochondrial matrix-facing; the sequence is TKGYVIRLYH…SEEKRHKDDK (98 aa).

The protein belongs to the TMEM70 family. As to quaternary structure, homooligomer. Interacts (homooligomer form) with ATP5MC1; this interaction facilitates the oligomer formation of subunit c/ATP5MC1 (c-ring) and the c-ring membrane insertion and also protects ATP5MC1 against intramitochondrial proteolysis. Interacts with the core subunits TMEM126B, NDUFAF1, ECSIT and ACAD9 of the MCIA complex. Interacts with ATP5MC3, TMEM242 and TIMMDC1. In terms of tissue distribution, lower expressed in the heart than in the liver (at protein level).

The protein resides in the mitochondrion inner membrane. Its function is as follows. Scaffold protein that participates in the c-ring assembly of mitochondrial ATP synthase (F(1)F(0) ATP synthase or complex V) by facilitating the membrane insertion and oligomer formation of the subunit c/ATP5MC1 through its interaction. Therefore, participates in the early stage of mitochondrial ATP synthase biogenesis and also protects subunit c/ATP5MC1 against intramitochondrial proteolysis. In addition, binds the mitochondrial proton-transporting ATP synthase complexes I and may play a role in the stability of its membrane-bound subassemblies. The sequence is that of Transmembrane protein 70, mitochondrial from Homo sapiens (Human).